The following is a 217-amino-acid chain: Polyadenylate-binding protein 3 (217 aa).

Residues 1-28 (MEEEEHEVYGGEIPEVGDTDVPDPDIDM) are disordered. Acidic residues predominate over residues 15-28 (EVGDTDVPDPDIDM). Residues 30–71 (AADEDAVTELAEMKRRLKEMEEEAAALREMQAKVEKEMGATQ) are a coiled coil. The necessary for homooligomerization stretch occupies residues 75–216 (SMAANQEGKE…FRRPMRYMPY (142 aa)). The RRM domain maps to 89 to 165 (RSVYVGNVDY…RQLKVSPKRT (77 aa)). A Nuclear localization signal motif is present at residues 162–169 (PKRTNVPG).

Monomer and homooligomer. Binds RNA as a monomer and oligomerizes when bound to poly(A). Forms a complex with cleavage and polyadenylation specificity factor (CPSF) subunits PAPS4, PABN1, PABN2, CSTF50 and FIPS5. Interacts with CSP3.

The protein localises to the nucleus speckle. The protein resides in the cytoplasm. Involved in the 3'-end formation of mRNA precursors (pre-mRNA) by the addition of a poly(A) tail of 200-250 nt to the upstream cleavage product. Stimulates poly(A) polymerase (PAPOLA) conferring processivity on the poly(A) tail elongation reaction and also controls the poly(A) tail length. Increases the affinity of poly(A) polymerase for RNA. Binds to poly(A) and to poly(G) with high affinity. May protect the poly(A) tail from degradation. This Arabidopsis thaliana (Mouse-ear cress) protein is Polyadenylate-binding protein 3.